The chain runs to 420 residues: Chaperone protein dnaJ 3 (420 aa).

One can recognise a J domain in the interval 14–75 (KFYEILGVPK…EKREIYDQYG (62 aa)). The CR-type zinc-finger motif lies at 135–219 (GTMKKLSLSR…CKGDKVIPEK (85 aa)). Cysteine 148, cysteine 151, cysteine 164, cysteine 167, cysteine 191, cysteine 194, cysteine 207, and cysteine 210 together coordinate Zn(2+). CXXCXGXG motif repeat units follow at residues 148–155 (CSKCNGKG), 164–171 (CGGCQGSG), 191–198 (CNECKGTG), and 207–214 (CPQCKGDK). Positions 376 to 420 (ETTLHDVNIEDEMRRKAQAQREAYDDDDEDDDHPGGAQRVQCAQQ) are disordered. Over residues 377–390 (TTLHDVNIEDEMRR) the composition is skewed to basic and acidic residues. Cysteine methyl ester is present on cysteine 417. Cysteine 417 carries the S-farnesyl cysteine lipid modification. Residues 418–420 (AQQ) constitute a propeptide, removed in mature form.

This sequence belongs to the DnaJ family. A/I subfamily. As to quaternary structure, homodimer. The cofactor is Zn(2+). In terms of processing, farnesylated. As to expression, roots, shoots, flowers, siliques and cotyledons.

Its subcellular location is the membrane. Its function is as follows. Plays a continuous role in plant development probably in the structural organization of compartments. The sequence is that of Chaperone protein dnaJ 3 (ATJ3) from Arabidopsis thaliana (Mouse-ear cress).